A 103-amino-acid chain; its full sequence is Gibberellin-regulated protein 13 (103 aa).

The first 20 residues, 1-20 (MATKLSIIVFSIVVLHLLLS), serve as a signal peptide directing secretion.

The protein belongs to the GASA family. In terms of processing, six disulfide bonds may be present.

It localises to the secreted. Gibberellin-regulated protein that may function in hormonal controlled steps of development such as seed germination, flowering and seed maturation. This chain is Gibberellin-regulated protein 13 (GASA13), found in Arabidopsis thaliana (Mouse-ear cress).